The sequence spans 624 residues: FAD-dependent monooxygenase apdD (624 aa).

FAD contacts are provided by glutamate 73 and aspartate 359.

This sequence belongs to the paxM FAD-dependent monooxygenase family. Requires FAD as cofactor.

It functions in the pathway secondary metabolite biosynthesis. Its function is as follows. FAD-dependent monooxygenase; part of the gene cluster that mediates the biosynthesis of aspyridones. The polyketide-amino acid backbone preaspyridone A is first assembled by the PKS-NRPS hybrid apdA. The assembly of preaspyridone A is initiated by loading of malonyl-CoA onto apdA, followed by decarboxylation to yield the acetyl starter unit. The growing polyketide chain then elongates into a tetraketide. The adpA PKS module catalyzes three Claisen condensations, as well as beta-keto processing and methylation. Alpha-methylation step during polyketide synthesis is a prerequisite and a key checkpoint for chain transfer between PKS and NRPS modules. The downstream NRPS module contains the condensation (C), adenylation (A), and thiolation (T) domains and catalyzes the incorporation of tyrosine via the formation of the L-tyrosinyl-thioester and the amide linkage between L-tyrosinyl-thioester and the tetraketide. The bimodular assembly line is terminated with a reductase (R) domain that facilitates formation and release of the tetramic acid product. Because apdA lacks a designated enoylreductase (ER) domain, the required activity is provided the enoyl reductase apdC. ApdC appears to operate with different stereoselectivity in different PKS cycle. Combined with apdC, apdA is proposed to synthesize preaspyridone A via about 20 enzymatic steps. A number of oxidative steps performed successively by the cytochrome P450 monooxygenases apdE and apdB are required for the conversion of preaspyridone A to aspyridone A. The cytochrome P450 monooxygenase apdE is responsible for the oxidative dephenylation of preaspyridone A. Finally, the predicted FAD-dependent monooxygenase apdD and the acyl-CoA dehydrogenase apdG may be involved in the transformation of aspyridone A into aspyridone B. This is FAD-dependent monooxygenase apdD from Emericella nidulans (strain FGSC A4 / ATCC 38163 / CBS 112.46 / NRRL 194 / M139) (Aspergillus nidulans).